The following is a 1081-amino-acid chain: MPRRKQEQPKRLPSHVSRQEEAEGELSEGEHWYGNSSETPSEASYGEVQENYKLSLEDRIQEQSTSPDTSLGSTTPSSHTLELVALDSEVLRDSLQCQDHLSPGVSSLCDDDPGSNKPLSSNLRRLLEAGSLKLDAAATANGRVESPVNVGSNLSFSPPSHHAQQLSVLARKLAEKQEQNDQYTPSNRFIWNQGKWLPNSTTTCSLSPDSAILKLKAAANAVLQDKSLTRTEETMRFESFSSPFSSQSASSTLAALSKKVSERSLTPGQEHPPPASSFLSLASMTSSAALLKEVAARAAGSLLAEKSSLLPEDPLPPPPSEKKPEKVTPPPPPPPPPPPPPPPQSLELLLLPVPKGRVSKPSNSASEEESGKPFQCPICGLVIKRKSYWKRHMVIHTGLKSHQCPLCPFRCARKDNLKSHMKVHQHQDRGETFQCQLCPFTSSRHFSLKLHMRCHQHFLRTEAKVKEEIPDPDVKGSPHLSDSACLGQQREGGGTELVGTMMTSNTPERTSQGGAGVSPLLVKEEPKEDNGLPTSFTLNAADRPANHTKLKDPSEYVANSASALFSQDISVKMASDFLMKLSAANQKEPMNLNFKVKEEPKEGESLSTTLPRSSYVFSPESEVSAPGVSEDALKPQEGKGSVLRRDVSVKAASELLMKLSAESYKETQMVKIKEEPMEVDIQDSHVSISPSRNVGYSTLIGREKTEPLQKMPEGRVPPERNLFSQDISVKMASELLFQLSEKVSKEHNHTKENTIRTTTSPFFSEDTFRQSPFTSNSKELLPSDSVLHGRISAPETEKIVLEAGNGLPSWKFNDQLFPCDVCGKVFGRQQTLSRHLSLHTEERKYKCHLCPYAAKCRANLNQHLTVHSVKLVSTDTEDIVSAVTSEGSDGKKHPYYYSCHVCGFETELNVQFVSHMSLHVDKEQWMFSICCTACDFVTMEEAEIKTHIGTKHTGEDRKTPSESNSPSSSSLSALSDSANSKDDSDGSQKNKGGNNLLVISVMPGSQPSLNSEEKPEKGFECVFCNFVCKTKNMFERHLQIHLITRMFECDVCHKFMKTPEQLLEHKKCHTVPTGGLNSGQW.

Residues 1–10 are compositionally biased toward basic and acidic residues; that stretch reads MPRRKQEQPK. The segment at 1 to 14 is mediates direct interaction with RBBP4; the sequence is MPRRKQEQPKRLPS. A disordered region spans residues 1-77; sequence MPRRKQEQPK…DTSLGSTTPS (77 aa). Residues 3 to 5 carry the RRK motif; mediates NuRD recruitment to telomeres motif; it reads RRK. Residues 62-77 are compositionally biased toward polar residues; it reads EQSTSPDTSLGSTTPS. Glycyl lysine isopeptide (Lys-Gly) (interchain with G-Cter in SUMO2) cross-links involve residues Lys-176, Lys-216, and Lys-226. 2 disordered regions span residues 259–278 and 307–348; these read KVSE…ASSF and SSLL…SLEL. Positions 327 to 344 are enriched in pro residues; that stretch reads VTPPPPPPPPPPPPPPPQ. Glycyl lysine isopeptide (Lys-Gly) (interchain with G-Cter in SUMO2) cross-links involve residues Lys-360 and Lys-372. C2H2-type zinc fingers lie at residues 374-396, 402-424, and 433-455; these read FQCP…MVIH, HQCP…MKVH, and FQCQ…MRCH. Glycyl lysine isopeptide (Lys-Gly) (interchain with G-Cter in SUMO2) cross-links involve residues Lys-466, Lys-475, Lys-523, Lys-549, Lys-580, Lys-587, Lys-597, Lys-634, Lys-639, and Lys-658. Residue Lys-673 forms a Glycyl lysine isopeptide (Lys-Gly) (interchain with G-Cter in SUMO1); alternate linkage. Lys-673 is covalently cross-linked (Glycyl lysine isopeptide (Lys-Gly) (interchain with G-Cter in SUMO2); alternate). Residues Lys-704, Lys-710, Lys-742, Lys-778, and Lys-798 each participate in a glycyl lysine isopeptide (Lys-Gly) (interchain with G-Cter in SUMO2) cross-link. 2 consecutive C2H2-type zinc fingers follow at residues 817 to 839 and 845 to 867; these read FPCD…LSLH and YKCH…LTVH. Residues Lys-870 and Lys-891 each participate in a glycyl lysine isopeptide (Lys-Gly) (interchain with G-Cter in SUMO2) cross-link. 2 C2H2-type zinc fingers span residues 897 to 919 and 929 to 952; these read YSCH…MSLH and ICCT…GTKH. Basic and acidic residues predominate over residues 947–960; that stretch reads HIGTKHTGEDRKTP. The tract at residues 947–996 is disordered; it reads HIGTKHTGEDRKTPSESNSPSSSSLSALSDSANSKDDSDGSQKNKGGNNL. Residue Lys-958 forms a Glycyl lysine isopeptide (Lys-Gly) (interchain with G-Cter in SUMO2) linkage. The span at 961 to 978 shows a compositional bias: low complexity; the sequence is SESNSPSSSSLSALSDSA. Residues 979–988 are compositionally biased toward basic and acidic residues; sequence NSKDDSDGSQ. Residue Lys-1014 forms a Glycyl lysine isopeptide (Lys-Gly) (interchain with G-Cter in SUMO2) linkage. 2 consecutive C2H2-type zinc fingers follow at residues 1019–1041 and 1047–1069; these read FECV…LQIH and FECD…KKCH.

The protein belongs to the krueppel C2H2-type zinc-finger protein family. Part of a transcription inhibitory ribonucleoprotein complex composed at least of the circular RNA circZNF827, HNRNPK and HNRNPL. Interacts with the nucleosome remodeling and histone deacetylase/NuRD complex. Interacts with RBBP4; the interaction is direct and recruits RBBP4, a component of the NuRD complex, to telomeres.

It localises to the nucleus. The protein localises to the chromosome. It is found in the telomere. Functionally, as part of a ribonucleoprotein complex composed at least of HNRNPK, HNRNPL and the circular RNA circZNF827 that nucleates the complex on chromatin, may negatively regulate the transcription of genes involved in neuronal differentiation. Could also recruit the nucleosome remodeling and histone deacetylase/NuRD complex to telomeric regions of chromosomes to regulate chromatin remodeling as part of telomere maintenance. This chain is Zinc finger protein 827 (ZNF827), found in Homo sapiens (Human).